The chain runs to 126 residues: Fluoride-specific ion channel FluC (126 aa).

4 helical membrane passes run 4–24 (YLYIAAGGAAGSLCRYLVSGV), 35–55 (IGTFSVNMIGCLFFGLVTGLF), 67–87 (LLILTGFMGAFTTFSTYMFES), and 100–120 (ALNIGGQSILGFACIVGGLAL). Na(+) is bound by residues Gly-75 and Thr-78.

Belongs to the fluoride channel Fluc/FEX (TC 1.A.43) family.

It localises to the cell inner membrane. The catalysed reaction is fluoride(in) = fluoride(out). With respect to regulation, na(+) is not transported, but it plays an essential structural role and its presence is essential for fluoride channel function. Its function is as follows. Fluoride-specific ion channel. Important for reducing fluoride concentration in the cell, thus reducing its toxicity. The chain is Fluoride-specific ion channel FluC from Maridesulfovibrio salexigens (strain ATCC 14822 / DSM 2638 / NCIMB 8403 / VKM B-1763) (Desulfovibrio salexigens).